The primary structure comprises 557 residues: UvrABC system protein C (557 aa).

Positions 14-89 (EEPGVYIFKN…IKKYRPKYNV (76 aa)) constitute a GIY-YIG domain. The region spanning 194-229 (EEVFDYLKEKMETHSKMLDFENAAKYRDLLLNLSNV) is the UVR domain.

It belongs to the UvrC family. In terms of assembly, interacts with UvrB in an incision complex.

The protein localises to the cytoplasm. The UvrABC repair system catalyzes the recognition and processing of DNA lesions. UvrC both incises the 5' and 3' sides of the lesion. The N-terminal half is responsible for the 3' incision and the C-terminal half is responsible for the 5' incision. The sequence is that of UvrABC system protein C from Thermotoga maritima (strain ATCC 43589 / DSM 3109 / JCM 10099 / NBRC 100826 / MSB8).